A 283-amino-acid polypeptide reads, in one-letter code: Biotin synthase (283 aa).

A Radical SAM core domain is found at 3–232 (KISNEIFLCS…NTRLMIAGGR (230 aa)). [4Fe-4S] cluster-binding residues include Cys21, Cys25, and Cys28. Residues Cys65, Cys100, and Arg225 each coordinate [2Fe-2S] cluster.

The protein belongs to the radical SAM superfamily. Biotin synthase family. In terms of assembly, homodimer. The cofactor is [4Fe-4S] cluster. Requires [2Fe-2S] cluster as cofactor.

The catalysed reaction is (4R,5S)-dethiobiotin + (sulfur carrier)-SH + 2 reduced [2Fe-2S]-[ferredoxin] + 2 S-adenosyl-L-methionine = (sulfur carrier)-H + biotin + 2 5'-deoxyadenosine + 2 L-methionine + 2 oxidized [2Fe-2S]-[ferredoxin]. Its pathway is cofactor biosynthesis; biotin biosynthesis; biotin from 7,8-diaminononanoate: step 2/2. Catalyzes the conversion of dethiobiotin (DTB) to biotin by the insertion of a sulfur atom into dethiobiotin via a radical-based mechanism. This is Biotin synthase from Helicobacter hepaticus (strain ATCC 51449 / 3B1).